The following is a 139-amino-acid chain: Putative pre-16S rRNA nuclease (139 aa).

Belongs to the YqgF nuclease family.

Its subcellular location is the cytoplasm. Its function is as follows. Could be a nuclease involved in processing of the 5'-end of pre-16S rRNA. This is Putative pre-16S rRNA nuclease from Streptococcus pyogenes serotype M49 (strain NZ131).